Reading from the N-terminus, the 433-residue chain is E3 ubiquitin-protein ligase RNF26 (433 aa).

Transmembrane regions (helical) follow at residues 24-44 (LNFLLVSSLLASLAWLLAFVY), 60-80 (GVLLSLLALIEAVVRFTCGGL), 147-169 (VINSLVNICLIGTQNLFSLVLAL), 183-203 (VVAAFLAHISSSAVAMAILLW), and 220-240 (LASFVLVNLTGLVLLACVLAV). The RING-type zinc finger occupies 380 to 422 (CVICQDQSKTVLLLPCRHLCLCQACTEILMRHPVYHRNCPLCR).

In terms of assembly, interacts with INCA1. Interacts with TMEM43, ENDOD1, TMEM33 and TMED1 to form a complex capable of modulating innate immune signaling through the cGAS-STING pathway. Interacts with UBE2J1; this interaction is important for SQSTM1 ubiquitination. Ubiquitous. Up-regulated in several cancer cell lines.

The protein localises to the endoplasmic reticulum membrane. It carries out the reaction S-ubiquitinyl-[E2 ubiquitin-conjugating enzyme]-L-cysteine + [acceptor protein]-L-lysine = [E2 ubiquitin-conjugating enzyme]-L-cysteine + N(6)-ubiquitinyl-[acceptor protein]-L-lysine.. It functions in the pathway protein modification; protein ubiquitination. E3 ubiquitin-protein ligase that plays a key role in endosome organization by retaining vesicles in the perinuclear cloud. Acts as a platform for perinuclear positioning of the endosomal system by mediating ubiquitination of SQSTM1 through interaction with the ubiquitin conjugating enzyme UBE2J1. Ubiquitinated SQSTM1 attracts specific vesicle-associated adapters, forming a molecular bridge that restrains cognate vesicles in the perinuclear region and organizes the endosomal pathway for efficient cargo transport. Also acts as a regulator of type I interferon production in response to viral infection by mediating the formation of 'Lys-11'-linked polyubiquitin chains on TMEM173/STING, leading to stabilize TMEM173/STING. Also required to limit type I interferon response by promoting autophagic degradation of IRF3. This Homo sapiens (Human) protein is E3 ubiquitin-protein ligase RNF26.